Reading from the N-terminus, the 170-residue chain is MTKIGLFYGTQTGNTETIAELIQKEMGGDSVVDMMDISQADVDDFRQYSCLIIGCPTWNVGELQSDWEGFYDQLDEIDFNGKKVAYFGAGDQVGYADNFQDAMGILEEKISGLGGKTVGFWPTAGYDFDESKAVKNGKFVGLALDEDNQPELTELRVKTWVSEIKPILQS.

The Flavodoxin-like domain maps to 4 to 165 (IGLFYGTQTG…RVKTWVSEIK (162 aa)).

It belongs to the flavodoxin family. It depends on FMN as a cofactor.

Functionally, low-potential electron donor to a number of redox enzymes. In Synechocystis sp. (strain ATCC 27184 / PCC 6803 / Kazusa), this protein is Flavodoxin (isiB).